The sequence spans 293 residues: Shikimate dehydrogenase (NADP(+)) (293 aa).

Shikimate-binding positions include 26–28 (SKS) and threonine 73. Residue lysine 77 is the Proton acceptor of the active site. NADP(+) is bound at residue glutamate 89. Shikimate-binding residues include asparagine 98 and aspartate 113. NADP(+)-binding positions include 137-141 (GAGGA), 161-166 (NRTRQR), and isoleucine 231. Tyrosine 233 serves as a coordination point for shikimate. Glycine 254 is a binding site for NADP(+).

It belongs to the shikimate dehydrogenase family. Homodimer.

The enzyme catalyses shikimate + NADP(+) = 3-dehydroshikimate + NADPH + H(+). The protein operates within metabolic intermediate biosynthesis; chorismate biosynthesis; chorismate from D-erythrose 4-phosphate and phosphoenolpyruvate: step 4/7. Its function is as follows. Involved in the biosynthesis of the chorismate, which leads to the biosynthesis of aromatic amino acids. Catalyzes the reversible NADPH linked reduction of 3-dehydroshikimate (DHSA) to yield shikimate (SA). In Bartonella quintana (strain Toulouse) (Rochalimaea quintana), this protein is Shikimate dehydrogenase (NADP(+)).